Here is a 384-residue protein sequence, read N- to C-terminus: Beta-glucuronosyltransferase GlcAT14C (384 aa).

The Cytoplasmic segment spans residues 1 to 11; the sequence is MKRSHISSPRS. A signal-anchor for type II membrane protein membrane pass occupies residues 12–34; it reads YSRPAISIFGVFLLFLLVLTLSS. The Lumenal segment spans residues 35 to 384; sequence RKPSDSSSGL…HENFRAKQCK (350 aa). N-linked (GlcNAc...) asparagine glycans are attached at residues asparagine 156, asparagine 285, and asparagine 306.

It belongs to the glycosyltransferase 14 family.

It is found in the golgi apparatus membrane. Its function is as follows. Beta-glucuronosyltransferase involved in the biosynthesis of type II arabinogalactan (AG). Modifies both the beta-1,6-linked galactan and beta-1,3-linked galactan present in type II AG. The polypeptide is Beta-glucuronosyltransferase GlcAT14C (Arabidopsis thaliana (Mouse-ear cress)).